Reading from the N-terminus, the 150-residue chain is Endoribonuclease YbeY (150 aa).

Zn(2+)-binding residues include His-112, His-116, and His-122.

The protein belongs to the endoribonuclease YbeY family. The cofactor is Zn(2+).

It localises to the cytoplasm. Functionally, single strand-specific metallo-endoribonuclease involved in late-stage 70S ribosome quality control and in maturation of the 3' terminus of the 16S rRNA. The chain is Endoribonuclease YbeY from Bdellovibrio bacteriovorus (strain ATCC 15356 / DSM 50701 / NCIMB 9529 / HD100).